Consider the following 130-residue polypeptide: Small ribosomal subunit protein uS8 (130 aa).

The protein belongs to the universal ribosomal protein uS8 family. Part of the 30S ribosomal subunit. Contacts proteins S5 and S12.

Functionally, one of the primary rRNA binding proteins, it binds directly to 16S rRNA central domain where it helps coordinate assembly of the platform of the 30S subunit. The polypeptide is Small ribosomal subunit protein uS8 (Klebsiella pneumoniae subsp. pneumoniae (strain ATCC 700721 / MGH 78578)).